Reading from the N-terminus, the 372-residue chain is Biotin synthase (372 aa).

Positions 73–308 constitute a Radical SAM core domain; the sequence is CCGNTVDLCS…QQIIRYAGGR (236 aa). 3 residues coordinate [4Fe-4S] cluster: cysteine 91, cysteine 95, and cysteine 98. Residues cysteine 136, cysteine 173, cysteine 233, and arginine 303 each coordinate [2Fe-2S] cluster.

It belongs to the radical SAM superfamily. Biotin synthase family. In terms of assembly, homodimer. [4Fe-4S] cluster is required as a cofactor. [2Fe-2S] cluster serves as cofactor.

It carries out the reaction (4R,5S)-dethiobiotin + (sulfur carrier)-SH + 2 reduced [2Fe-2S]-[ferredoxin] + 2 S-adenosyl-L-methionine = (sulfur carrier)-H + biotin + 2 5'-deoxyadenosine + 2 L-methionine + 2 oxidized [2Fe-2S]-[ferredoxin]. The protein operates within cofactor biosynthesis; biotin biosynthesis; biotin from 7,8-diaminononanoate: step 2/2. Its function is as follows. Catalyzes the conversion of dethiobiotin (DTB) to biotin by the insertion of a sulfur atom into dethiobiotin via a radical-based mechanism. The sequence is that of Biotin synthase from Cyanothece sp. (strain PCC 7425 / ATCC 29141).